The sequence spans 257 residues: MNKKILNFIKKKNKTKIISLTAYSKNIASIIDRHCDLVLVGDSLGSVLYSFSSTKKVTLDMMIEHSKSVRMGVKKSLMVVDMPHNTYRNSKEALSNAKKIISKTKCDAIKLEGGKKVIQIIKTLIKNKIPVMGHLGVLPQSATNFKFKGKEIAERKIILRDSKLLEDAGVFSIVLECVESSLAKEITKTVKVPTIGIGASVHCDGQVLVTDDLIGLNKIKARFVKRYSNIEKQINDAALKFKKDVIRSKFPTKKHSY.

Residues D42 and D81 each coordinate Mg(2+). 3-methyl-2-oxobutanoate contacts are provided by residues 42–43 (DS), D81, and K110. Mg(2+) is bound at residue E112. E176 (proton acceptor) is an active-site residue.

This sequence belongs to the PanB family. Homodecamer; pentamer of dimers. The cofactor is Mg(2+).

The protein localises to the cytoplasm. It carries out the reaction 3-methyl-2-oxobutanoate + (6R)-5,10-methylene-5,6,7,8-tetrahydrofolate + H2O = 2-dehydropantoate + (6S)-5,6,7,8-tetrahydrofolate. The protein operates within cofactor biosynthesis; (R)-pantothenate biosynthesis; (R)-pantoate from 3-methyl-2-oxobutanoate: step 1/2. In terms of biological role, catalyzes the reversible reaction in which hydroxymethyl group from 5,10-methylenetetrahydrofolate is transferred onto alpha-ketoisovalerate to form ketopantoate. This chain is 3-methyl-2-oxobutanoate hydroxymethyltransferase, found in Pelagibacter ubique (strain HTCC1062).